An 84-amino-acid chain; its full sequence is Putative defensin-like protein 63 (84 aa).

Residues 1–21 (MDIRKTYVIIFFVGILTISFS) form the signal peptide. Cystine bridges form between Cys-40/Cys-81, Cys-44/Cys-67, Cys-53/Cys-79, and Cys-57/Cys-80.

It belongs to the DEFL family.

It is found in the secreted. The chain is Putative defensin-like protein 63 from Arabidopsis thaliana (Mouse-ear cress).